Consider the following 1225-residue polypeptide: uncharacterized protein (1225 aa).

The span at 1–15 (MSSQAEPSKGASNAD) shows a compositional bias: polar residues. The interval 1 to 104 (MSSQAEPSKG…VDGVPTRPVS (104 aa)) is disordered. A compositionally biased stretch (basic and acidic residues) spans 16–25 (PNEKVEKMHL). The span at 43 to 65 (ASPSDKNNLNPQSAGVSEVQVQD) shows a compositional bias: polar residues. A helical transmembrane segment spans residues 167–187 (FLFGYLRFGFLSLFIIMAVCI). The region spanning 217 to 422 (DSETVTWLNT…SPNVYELDIE (206 aa)) is the SMP-LTD domain. C2 domains lie at 413-534 (SPNV…NDAF), 559-668 (DSGE…LLWF), and 685-803 (KPAQ…GALM). A Phosphoserine modification is found at Ser843. A disordered region spans residues 867–890 (PESQKTPTAVDNTSTSRGSTSVKT). Residues 869–890 (SQKTPTAVDNTSTSRGSTSVKT) show a composition bias toward polar residues. Residues 1019–1137 (RLTPVPVKLE…QQQQQTNYEI (119 aa)) form the C2 4 domain. 5 residues coordinate Ca(2+): Asp1053, Asp1059, Asp1107, Asp1109, and Asp1115.

It depends on Ca(2+) as a cofactor.

It is found in the endoplasmic reticulum membrane. This is an uncharacterized protein from Schizosaccharomyces pombe (strain 972 / ATCC 24843) (Fission yeast).